The primary structure comprises 262 residues: Small ribosomal subunit protein eS4 (262 aa).

The 63-residue stretch at 42–104 (LPLLIFLRNR…TGEFFRLIYD (63 aa)) folds into the S4 RNA-binding domain.

This sequence belongs to the eukaryotic ribosomal protein eS4 family.

This Lysiphlebus testaceipes (Greenbugs aphid parastoid) protein is Small ribosomal subunit protein eS4 (RpS4).